A 557-amino-acid polypeptide reads, in one-letter code: Prosaposin (557 aa).

An N-terminal signal peptide occupies residues Met-1–Thr-16. Positions Ser-17–Lys-59 are excised as a propeptide. One can recognise a Saposin A-type 1 domain in the interval Pro-18 to Ala-58. Saposin B-type domains lie at Lys-59–Gln-142, Asn-193–Lys-277, Asn-313–Pro-394, and Asn-438–Tyr-519. Disulfide bonds link Cys-63–Cys-138, Cys-66–Cys-132, and Cys-94–Cys-106. The N-linked (GlcNAc...) asparagine glycan is linked to Asn-80. Positions Glu-143–Asn-193 are excised as a propeptide. Disulfide bonds link Cys-197–Cys-273, Cys-200–Cys-267, and Cys-229–Cys-240. The N-linked (GlcNAc...) asparagine glycan is linked to Asn-214. Residues Lys-277–His-312 constitute a propeptide that is removed on maturation. Cystine bridges form between Cys-317/Cys-390, Cys-320/Cys-384, and Cys-348/Cys-359. Asn-334 is a glycosylation site (N-linked (GlcNAc...) asparagine). The propeptide occupies Arg-393–Lys-437. Cystine bridges form between Cys-442-Cys-515, Cys-445-Cys-509, and Cys-473-Cys-484. N-linked (GlcNAc...) asparagine glycosylation is present at Asn-459. Positions Lys-520–Asn-557 are excised as a propeptide. The Saposin A-type 2 domain maps to Leu-521–Asn-557.

As to quaternary structure, saposin-B is a homodimer. Prosaposin exists as a roughly half-half mixture of monomers and disulfide-linked dimers. Monomeric prosaposin interacts (via C-terminus) with sortilin/SORT1, the interaction is required for targeting to lysosomes. Interacts with GRN; facilitates lysosomal delivery of progranulin from the extracellular space and the biosynthetic pathway.

The protein resides in the secreted. It localises to the lysosome. Behaves as a myelinotrophic and neurotrophic factor, these effects are mediated by its G-protein-coupled receptors, GPR37 and GPR37L1, undergoing ligand-mediated internalization followed by ERK phosphorylation signaling. Its function is as follows. Saposin-A and saposin-C stimulate the hydrolysis of glucosylceramide by beta-glucosylceramidase (EC 3.2.1.45) and galactosylceramide by beta-galactosylceramidase (EC 3.2.1.46). Saposin-C apparently acts by combining with the enzyme and acidic lipid to form an activated complex, rather than by solubilizing the substrate. In terms of biological role, saposin-B stimulates the hydrolysis of galacto-cerebroside sulfate by arylsulfatase A (EC 3.1.6.8), GM1 gangliosides by beta-galactosidase (EC 3.2.1.23) and globotriaosylceramide by alpha-galactosidase A (EC 3.2.1.22). Saposin-B forms a solubilizing complex with the substrates of the sphingolipid hydrolases. Functionally, saposin-D is a specific sphingomyelin phosphodiesterase activator (EC 3.1.4.12). Saposins are specific low-molecular mass non-enzymatic proteins, they participate in the lysosomal degradation of sphingolipids, which takes place by the sequential action of specific hydrolases. This Mus musculus (Mouse) protein is Prosaposin (Psap).